Reading from the N-terminus, the 430-residue chain is Putative membrane fusion protein SilB (430 aa).

The first 28 residues, 1 to 28 (MASLKIKYAAIIISSLIAGGLISVTAWQ), serve as a signal peptide directing secretion. The tract at residues 407–430 (RHPEKTENSMPAMSEQPVNMHSGH) is disordered. The segment covering 414–430 (NSMPAMSEQPVNMHSGH) has biased composition (polar residues).

It belongs to the membrane fusion protein (MFP) (TC 8.A.1) family.

Its function is as follows. Component of the sil cation efflux system that confers resistance to silver. May be part of a three-component cation/proton antiporter. The sequence is that of Putative membrane fusion protein SilB (silB) from Salmonella typhimurium.